Here is a 507-residue protein sequence, read N- to C-terminus: Glycerol kinase (507 aa).

Threonine 15 is an ADP binding site. Threonine 15, threonine 16, and serine 17 together coordinate ATP. Threonine 15 is a sn-glycerol 3-phosphate binding site. Arginine 19 serves as a coordination point for ADP. Sn-glycerol 3-phosphate is bound by residues arginine 85, glutamate 86, tyrosine 137, and aspartate 250. Positions 85, 86, 137, 250, and 251 each coordinate glycerol. ADP contacts are provided by threonine 272 and glycine 316. Residues threonine 272, glycine 316, glutamine 320, and glycine 417 each contribute to the ATP site. Glycine 417 provides a ligand contact to ADP.

Belongs to the FGGY kinase family.

It carries out the reaction glycerol + ATP = sn-glycerol 3-phosphate + ADP + H(+). Its pathway is polyol metabolism; glycerol degradation via glycerol kinase pathway; sn-glycerol 3-phosphate from glycerol: step 1/1. Inhibited by fructose 1,6-bisphosphate (FBP). Key enzyme in the regulation of glycerol uptake and metabolism. Catalyzes the phosphorylation of glycerol to yield sn-glycerol 3-phosphate. This chain is Glycerol kinase, found in Mycoplasmopsis pulmonis (strain UAB CTIP) (Mycoplasma pulmonis).